A 132-amino-acid chain; its full sequence is MASSIWKGLVGIGLFALAHAAFSAAQHRSYMRLTEKEDETLPIDIVLQTLLAFIVACYGIVHIAGEFKDMDATSELRNKTFDTLRNHPSFYVFNHRGRVMFQPPESEDCHRIQAPFSSNSSLKLSKLESMHR.

Topologically, residues 1–3 are cytoplasmic; it reads MAS. Residues 4–22 traverse the membrane as a helical segment; sequence SIWKGLVGIGLFALAHAAF. Topologically, residues 23-43 are lumenal; the sequence is SAAQHRSYMRLTEKEDETLPI. Residues 44–63 form a helical membrane-spanning segment; the sequence is DIVLQTLLAFIVACYGIVHI. The Cytoplasmic segment spans residues 64–132; that stretch reads AGEFKDMDAT…KLSKLESMHR (69 aa).

This sequence belongs to the membrane magnesium transporter (TC 1.A.67) family. Component of the ER membrane protein complex (EMC).

The protein localises to the endoplasmic reticulum membrane. The protein resides in the golgi apparatus membrane. It is found in the early endosome membrane. Functionally, part of the endoplasmic reticulum membrane protein complex (EMC) that enables the energy-independent insertion into endoplasmic reticulum membranes of newly synthesized membrane proteins. Preferentially accommodates proteins with transmembrane domains that are weakly hydrophobic or contain destabilizing features such as charged and aromatic residues. Involved in the cotranslational insertion of multi-pass membrane proteins in which stop-transfer membrane-anchor sequences become ER membrane spanning helices. It is also required for the post-translational insertion of tail-anchored/TA proteins in endoplasmic reticulum membranes. By mediating the proper cotranslational insertion of N-terminal transmembrane domains in an N-exo topology, with translocated N-terminus in the lumen of the ER, controls the topology of multi-pass membrane proteins like the G protein-coupled receptors. By regulating the insertion of various proteins in membranes, it is indirectly involved in many cellular processes. May be involved in Mg(2+) transport. This chain is ER membrane protein complex subunit 5, found in Xenopus tropicalis (Western clawed frog).